The primary structure comprises 124 residues: Small ribosomal subunit protein uS12 (124 aa).

The tract at residues 1–20 is disordered; that stretch reads MPTIQQLVRKGRTPKVVKTK. Residues 9–18 are compositionally biased toward basic residues; it reads RKGRTPKVVK. Asp89 is subject to 3-methylthioaspartic acid.

The protein belongs to the universal ribosomal protein uS12 family. As to quaternary structure, part of the 30S ribosomal subunit. Contacts proteins S8 and S17. May interact with IF1 in the 30S initiation complex.

With S4 and S5 plays an important role in translational accuracy. Its function is as follows. Interacts with and stabilizes bases of the 16S rRNA that are involved in tRNA selection in the A site and with the mRNA backbone. Located at the interface of the 30S and 50S subunits, it traverses the body of the 30S subunit contacting proteins on the other side and probably holding the rRNA structure together. The combined cluster of proteins S8, S12 and S17 appears to hold together the shoulder and platform of the 30S subunit. The chain is Small ribosomal subunit protein uS12 from Clavibacter michiganensis subsp. michiganensis (strain NCPPB 382).